A 323-amino-acid polypeptide reads, in one-letter code: Arginase-1 (323 aa).

The interval 1 to 27 (MSSKPKSLEIIGAPFSKGQPRGGVEKG) is disordered. A Phosphoserine modification is found at S7. Residue K17 is modified to N6-succinyllysine. S62 and S72 each carry phosphoserine. N6-succinyllysine is present on K75. The Mn(2+) site is built by H101, D124, H126, and D128. Residues 126-130 (HTDIN) and 137-139 (SGN) each bind substrate. The residue at position 163 (S163) is a Phosphoserine. D183 serves as a coordination point for substrate. Phosphoserine is present on S217. Residues D232 and D234 each contribute to the Mn(2+) site. Residues T246 and E277 each contribute to the substrate site. T281 is subject to Phosphothreonine.

Belongs to the arginase family. In terms of assembly, homotrimer. Interacts with CMTM6. Requires Mn(2+) as cofactor. Expressed in macrophages. Expressed in precursor and mature group 2 innate lymphoid cells (ILC2s). Expressed in lung tumor-associated myeloid cells. Expressed in lung tumor-infiltrating dendritic cells.

It is found in the cytoplasm. The protein localises to the cytoplasmic granule. The enzyme catalyses L-arginine + H2O = urea + L-ornithine. Its pathway is nitrogen metabolism; urea cycle; L-ornithine and urea from L-arginine: step 1/1. Functionally, key element of the urea cycle converting L-arginine to urea and L-ornithine, which is further metabolized into metabolites proline and polyamides that drive collagen synthesis and bioenergetic pathways critical for cell proliferation, respectively; the urea cycle takes place primarily in the liver and, to a lesser extent, in the kidneys. Its function is as follows. Functions in L-arginine homeostasis in nonhepatic tissues characterized by the competition between nitric oxide synthase (NOS) and arginase for the available intracellular substrate arginine. Arginine metabolism is a critical regulator of innate and adaptive immune responses. Involved in an antimicrobial effector pathway in polymorphonuclear granulocytes (PMN). Upon PMN cell death is liberated from the phagolysosome and depletes arginine in the microenvironment leading to suppressed T cell and natural killer (NK) cell proliferation and cytokine secretion. In group 2 innate lymphoid cells (ILC2s) promotes acute type 2 inflammation in the lung and is involved in optimal ILC2 proliferation but not survival. Plays a role in the immune response of alternatively activated or M2 macrophages in processes such as wound healing and tissue regeneration, immune defense against multicellular pathogens and parasites, and immune suppression and allergic inflammation; the regulatory outcome seems to be organ specific. In tumor-infiltrating dendritic cells (DCs) and myeloid-derived suppressor cells (MDSCs) plays a role in suppression of T cell-mediated antitumor immunity. The protein is Arginase-1 (Arg1) of Mus musculus (Mouse).